The sequence spans 448 residues: Phosphoglucosamine mutase (448 aa).

Ser-89 functions as the Phosphoserine intermediate in the catalytic mechanism. The Mg(2+) site is built by Ser-89, Asp-232, Asp-234, and Asp-236. The residue at position 89 (Ser-89) is a Phosphoserine.

The protein belongs to the phosphohexose mutase family. In terms of assembly, forms large aggregates. Mg(2+) is required as a cofactor. Activated by phosphorylation.

The enzyme catalyses alpha-D-glucosamine 1-phosphate = D-glucosamine 6-phosphate. Its function is as follows. Catalyzes the conversion of glucosamine-6-phosphate to glucosamine-1-phosphate. In Methanocaldococcus jannaschii (strain ATCC 43067 / DSM 2661 / JAL-1 / JCM 10045 / NBRC 100440) (Methanococcus jannaschii), this protein is Phosphoglucosamine mutase (glmM).